The following is a 799-amino-acid chain: Zinc finger X-linked protein ZXDA (799 aa).

The disordered stretch occupies residues 1 to 89 (MEIPKLLPAR…QPSGGGDDFF (89 aa)). Gly residues predominate over residues 13 to 26 (LQGGGGGGIPAGGG). 10 C2H2-type zinc fingers span residues 267–291 (YLCP…LLTH), 300–324 (FKCP…LQSH), 330–354 (FGCP…MKGH), 360–382 (FKCE…QRSH), 389–413 (YQCA…NRAH), 420–444 (FSCS…LRSH), 450–474 (FLCD…KRKH), 480–504 (FMCP…SITH), 510–534 (FVCP…SKKH), and 543–568 (SRCP…VKRH). The interval 267–573 (YLCPEALCGQ…MVKRHKVGQD (307 aa)) is required for interaction with ZXDC. A required for transcriptional activation region spans residues 572 to 699 (QDLLAQLEAA…NMDEVSSVSV (128 aa)).

The protein belongs to the ZXD family. As to quaternary structure, self-associates. Interacts with ZXDC and CIITA. In terms of tissue distribution, may be expressed in brain, heart, kidney, liver, lung, muscle and placenta.

The protein localises to the nucleus. Cooperates with CIITA to promote transcription of MHC class I and MHC class II genes. The protein is Zinc finger X-linked protein ZXDA (ZXDA) of Homo sapiens (Human).